A 119-amino-acid chain; its full sequence is Large ribosomal subunit protein bL20 (119 aa).

The protein belongs to the bacterial ribosomal protein bL20 family.

Its function is as follows. Binds directly to 23S ribosomal RNA and is necessary for the in vitro assembly process of the 50S ribosomal subunit. It is not involved in the protein synthesizing functions of that subunit. The protein is Large ribosomal subunit protein bL20 of Shouchella clausii (strain KSM-K16) (Alkalihalobacillus clausii).